Consider the following 657-residue polypeptide: Glycogen debranching enzyme (657 aa).

Catalysis depends on D336, which acts as the Nucleophile. E371 (proton donor) is an active-site residue. Over residues 458–467 the composition is skewed to basic and acidic residues; that stretch reads NEANGEENRD. The disordered stretch occupies residues 458–479; sequence NEANGEENRDGTNNNYSNNHGK.

Belongs to the glycosyl hydrolase 13 family.

The enzyme catalyses Hydrolysis of (1-&gt;6)-alpha-D-glucosidic linkages to branches with degrees of polymerization of three or four glucose residues in limit dextrin.. Its pathway is glycan degradation; glycogen degradation. Removes maltotriose and maltotetraose chains that are attached by 1,6-alpha-linkage to the limit dextrin main chain, generating a debranched limit dextrin. The chain is Glycogen debranching enzyme from Escherichia coli (strain 55989 / EAEC).